Reading from the N-terminus, the 175-residue chain is Ribosome maturation factor RimM (175 aa).

The region spanning 96–175 (EGDYYWHDLI…TIEVDWDAGF (80 aa)) is the PRC barrel domain.

The protein belongs to the RimM family. In terms of assembly, binds ribosomal protein uS19.

The protein localises to the cytoplasm. Its function is as follows. An accessory protein needed during the final step in the assembly of 30S ribosomal subunit, possibly for assembly of the head region. Essential for efficient processing of 16S rRNA. May be needed both before and after RbfA during the maturation of 16S rRNA. It has affinity for free ribosomal 30S subunits but not for 70S ribosomes. The sequence is that of Ribosome maturation factor RimM from Actinobacillus succinogenes (strain ATCC 55618 / DSM 22257 / CCUG 43843 / 130Z).